Reading from the N-terminus, the 224-residue chain is Uracil-DNA glycosylase (224 aa).

D64 functions as the Proton acceptor in the catalytic mechanism.

It belongs to the uracil-DNA glycosylase (UDG) superfamily. UNG family.

The protein localises to the cytoplasm. It carries out the reaction Hydrolyzes single-stranded DNA or mismatched double-stranded DNA and polynucleotides, releasing free uracil.. Its function is as follows. Excises uracil residues from the DNA which can arise as a result of misincorporation of dUMP residues by DNA polymerase or due to deamination of cytosine. The sequence is that of Uracil-DNA glycosylase from Clostridioides difficile (strain 630) (Peptoclostridium difficile).